Consider the following 338-residue polypeptide: Tryptophan--tRNA ligase (338 aa).

ATP contacts are provided by residues 11–13 and 19–20; these read QPS and GN. A 'HIGH' region motif is present at residues 12 to 20; sequence PSGELSIGN. An L-tryptophan-binding site is contributed by D135. ATP contacts are provided by residues 147–149, V189, and 198–202; these read GSD and KMSKS. Positions 198-202 match the 'KMSKS' region motif; the sequence is KMSKS.

This sequence belongs to the class-I aminoacyl-tRNA synthetase family. As to quaternary structure, homodimer.

The protein localises to the cytoplasm. The catalysed reaction is tRNA(Trp) + L-tryptophan + ATP = L-tryptophyl-tRNA(Trp) + AMP + diphosphate + H(+). Functionally, catalyzes the attachment of tryptophan to tRNA(Trp). The polypeptide is Tryptophan--tRNA ligase (Vibrio parahaemolyticus serotype O3:K6 (strain RIMD 2210633)).